The chain runs to 194 residues: Imidazoleglycerol-phosphate dehydratase (194 aa).

This sequence belongs to the imidazoleglycerol-phosphate dehydratase family.

It localises to the cytoplasm. It catalyses the reaction D-erythro-1-(imidazol-4-yl)glycerol 3-phosphate = 3-(imidazol-4-yl)-2-oxopropyl phosphate + H2O. It participates in amino-acid biosynthesis; L-histidine biosynthesis; L-histidine from 5-phospho-alpha-D-ribose 1-diphosphate: step 6/9. This chain is Imidazoleglycerol-phosphate dehydratase, found in Bacillus cereus (strain G9842).